A 332-amino-acid polypeptide reads, in one-letter code: Ribosomal RNA-processing protein 8 (332 aa).

A disordered region spans residues 1 to 109 (MGKKRINEVS…EVEKKNEEGD (109 aa)). 2 stretches are compositionally biased toward basic residues: residues 38–53 (KKKK…KLAA) and 82–94 (KKKK…KKKY). A compositionally biased stretch (basic and acidic residues) spans 95-109 (KPEAAEVEKKNEEGD). Positions 158, 193, 213, 225, 226, and 242 each coordinate S-adenosyl-L-methionine.

It belongs to the methyltransferase superfamily. RRP8 family.

Its subcellular location is the nucleus. The protein localises to the nucleolus. Its function is as follows. Probable methyltransferase required to silence rDNA. The protein is Ribosomal RNA-processing protein 8 (rrp-8) of Caenorhabditis briggsae.